A 261-amino-acid polypeptide reads, in one-letter code: Cytochrome c oxidase subunit 3 (261 aa).

At 1-15 (MTHQTHAYHMVNPSP) the chain is on the mitochondrial matrix side. Residues 16–33 (WPLTGAFSALLLTSGLVM) traverse the membrane as a helical segment. At 34–38 (WFHYN) the chain is on the mitochondrial intermembrane side. A helical membrane pass occupies residues 39–62 (SITLLTLGLLTNILTMYQWWRDVI). Residues 63–77 (REGTYQGHHTPIVQK) are Mitochondrial matrix-facing. Residues 78–99 (GLRYGMILFIVSEVFFFAGFFW) form a helical membrane-spanning segment. Topologically, residues 100-129 (AFYHSSLVPTHDLGGCWPPTGISPLNPLEV) are mitochondrial intermembrane. The helical transmembrane segment at 130 to 150 (PLLNTSVLLASGVSITWAHHS) threads the bilayer. The Mitochondrial matrix segment spans residues 151–156 (LMEGKR). The chain crosses the membrane as a helical span at residues 157–178 (NHMNQALLITIMLGLYFTILQA). Residues 179–198 (SEYFETSFSISDGIYGSTFF) are Mitochondrial intermembrane-facing. The helical transmembrane segment at 199–224 (MATGFHGLHVIIGSTFLIVCLLRQLK) threads the bilayer. At 225-232 (FHFTSKHH) the chain is on the mitochondrial matrix side. A helical membrane pass occupies residues 233–255 (FGFEAAAWYWHFVDVVWLFLYVS). Over 256–261 (IYWWGS) the chain is Mitochondrial intermembrane.

Belongs to the cytochrome c oxidase subunit 3 family. In terms of assembly, component of the cytochrome c oxidase (complex IV, CIV), a multisubunit enzyme composed of 14 subunits. The complex is composed of a catalytic core of 3 subunits MT-CO1, MT-CO2 and MT-CO3, encoded in the mitochondrial DNA, and 11 supernumerary subunits COX4I, COX5A, COX5B, COX6A, COX6B, COX6C, COX7A, COX7B, COX7C, COX8 and NDUFA4, which are encoded in the nuclear genome. The complex exists as a monomer or a dimer and forms supercomplexes (SCs) in the inner mitochondrial membrane with NADH-ubiquinone oxidoreductase (complex I, CI) and ubiquinol-cytochrome c oxidoreductase (cytochrome b-c1 complex, complex III, CIII), resulting in different assemblies (supercomplex SCI(1)III(2)IV(1) and megacomplex MCI(2)III(2)IV(2)).

Its subcellular location is the mitochondrion inner membrane. It carries out the reaction 4 Fe(II)-[cytochrome c] + O2 + 8 H(+)(in) = 4 Fe(III)-[cytochrome c] + 2 H2O + 4 H(+)(out). In terms of biological role, component of the cytochrome c oxidase, the last enzyme in the mitochondrial electron transport chain which drives oxidative phosphorylation. The respiratory chain contains 3 multisubunit complexes succinate dehydrogenase (complex II, CII), ubiquinol-cytochrome c oxidoreductase (cytochrome b-c1 complex, complex III, CIII) and cytochrome c oxidase (complex IV, CIV), that cooperate to transfer electrons derived from NADH and succinate to molecular oxygen, creating an electrochemical gradient over the inner membrane that drives transmembrane transport and the ATP synthase. Cytochrome c oxidase is the component of the respiratory chain that catalyzes the reduction of oxygen to water. Electrons originating from reduced cytochrome c in the intermembrane space (IMS) are transferred via the dinuclear copper A center (CU(A)) of subunit 2 and heme A of subunit 1 to the active site in subunit 1, a binuclear center (BNC) formed by heme A3 and copper B (CU(B)). The BNC reduces molecular oxygen to 2 water molecules using 4 electrons from cytochrome c in the IMS and 4 protons from the mitochondrial matrix. The protein is Cytochrome c oxidase subunit 3 (mt-Co3) of Mus musculus (Mouse).